The sequence spans 143 residues: uncharacterized protein (143 aa).

Residues 13–143 (SLQFPHHRPG…QDAAHQCRIQ (131 aa)) are disordered. Residues 17 to 31 (PHHRPGLRRHRKNTT) are compositionally biased toward basic residues. 3 stretches are compositionally biased toward basic and acidic residues: residues 35 to 48 (AAVD…RGDA), 84 to 96 (DGRE…AEEK), and 112 to 133 (EKQH…DHAG). Positions 134–143 (QDAAHQCRIQ) are enriched in low complexity.

This is an uncharacterized protein from Homo sapiens (Human).